The chain runs to 364 residues: MKKDYYEILGLSKGASKDEIKKAYRKIAIKYHPDRNQGNEEAASIFKEATQAYEVLIDDNKKAKYDRFGHSAFEGGGFEGFSGGFSGFSDIFEDFGDIFDSFFTGNKGQERNRKHARGEDLGYNIEISLENAYFGYKNNINITRQILCHSCLGKKSEKGTSPSICNMCNGSGRVVQGGGFFRVTTTCSKCYGEGKTISNPCKSCKGKGRITNQETIQLNIPSGIDNNQQIKMKGKGNVNPDNQEYGDLYVKILIRSHKIFKRNGKDLYAMLPISFTQAALGKEVRIKTIASKEIKIQIPKGIENEEQIIVKGAGMPILQTEKFGNLILITKIKTPKNLNSNAIKLFENLSKELRDGDEIDLLKV.

The J domain maps to 4–69; the sequence is DYYEILGLSK…NKKAKYDRFG (66 aa). Residues 135-213 form a CR-type zinc finger; that stretch reads GYKNNINITR…CKGKGRITNQ (79 aa). The Zn(2+) site is built by Cys-148, Cys-151, Cys-165, Cys-168, Cys-187, Cys-190, Cys-201, and Cys-204. CXXCXGXG motif repeat units lie at residues 148-155, 165-172, 187-194, and 201-208; these read CHSCLGKK, CNMCNGSG, CSKCYGEG, and CKSCKGKG.

It belongs to the DnaJ family. Homodimer. It depends on Zn(2+) as a cofactor.

It is found in the cytoplasm. Participates actively in the response to hyperosmotic and heat shock by preventing the aggregation of stress-denatured proteins and by disaggregating proteins, also in an autonomous, DnaK-independent fashion. Unfolded proteins bind initially to DnaJ; upon interaction with the DnaJ-bound protein, DnaK hydrolyzes its bound ATP, resulting in the formation of a stable complex. GrpE releases ADP from DnaK; ATP binding to DnaK triggers the release of the substrate protein, thus completing the reaction cycle. Several rounds of ATP-dependent interactions between DnaJ, DnaK and GrpE are required for fully efficient folding. Also involved, together with DnaK and GrpE, in the DNA replication of plasmids through activation of initiation proteins. This chain is Chaperone protein DnaJ, found in Borrelia garinii subsp. bavariensis (strain ATCC BAA-2496 / DSM 23469 / PBi) (Borreliella bavariensis).